A 296-amino-acid chain; its full sequence is NAD kinase (296 aa).

Catalysis depends on D73, which acts as the Proton acceptor. Residues 73–74, K78, 151–152, R178, D180, and 191–196 contribute to the NAD(+) site; these read DG, NE, and TAHAMS.

It belongs to the NAD kinase family. A divalent metal cation serves as cofactor.

The protein localises to the cytoplasm. It catalyses the reaction NAD(+) + ATP = ADP + NADP(+) + H(+). Functionally, involved in the regulation of the intracellular balance of NAD and NADP, and is a key enzyme in the biosynthesis of NADP. Catalyzes specifically the phosphorylation on 2'-hydroxyl of the adenosine moiety of NAD to yield NADP. The sequence is that of NAD kinase from Francisella tularensis subsp. mediasiatica (strain FSC147).